The sequence spans 149 residues: Calmodulin-2 (149 aa).

Alanine 2 carries the post-translational modification N-acetylalanine. EF-hand domains lie at glutamate 8–asparagine 43, proline 44–aspartate 79, aspartate 81–lysine 116, and leucine 117–lysine 149. Positions 21, 23, 25, 27, 32, 57, 59, 61, 63, 68, 94, 96, 98, and 105 each coordinate Ca(2+). Lysine 116 bears the N6,N6,N6-trimethyllysine mark. Positions 130, 132, 134, 136, and 141 each coordinate Ca(2+).

It belongs to the calmodulin family.

Functionally, calmodulin mediates the control of a large number of enzymes, ion channels and other proteins by Ca(2+). Among the enzymes to be stimulated by the calmodulin-Ca(2+) complex are a number of protein kinases and phosphatases. This Oryza sativa subsp. indica (Rice) protein is Calmodulin-2 (CAM2).